The primary structure comprises 314 residues: Epithelial cell adhesion molecule (314 aa).

The signal sequence occupies residues 1–23 (MAPPQVLAFGLLLAAATAAVAAA). Residues 24-265 (QQGCVCENYK…PPEFSMQGLQ (242 aa)) are Extracellular-facing. 6 cysteine pairs are disulfide-bonded: Cys-27–Cys-46, Cys-29–Cys-59, Cys-38–Cys-48, Cys-66–Cys-99, Cys-110–Cys-116, and Cys-118–Cys-135. Asn-37 carries an N-linked (GlcNAc...) asparagine glycan. Residues 63–135 (ASKCLVMKAE…RTDKDSEISC (73 aa)) enclose the Thyroglobulin type-1 domain. N-linked (GlcNAc...) asparagine glycosylation is present at Asn-111. Asn-198 carries N-linked (GlcNAc...) asparagine glycosylation. Residues 266 to 288 (AGIIAVIAVVAIAIVAGIIVLIV) form a helical membrane-spanning segment. Residues 289–314 (STKKRRAKYEKAEIKEMGEMHRELNA) lie on the Cytoplasmic side of the membrane.

The protein belongs to the EPCAM family. In terms of assembly, monomer. Interacts with phosphorylated CLDN7. Post-translationally, glycosylation at Asn-198 is crucial for protein stability.

It localises to the lateral cell membrane. The protein localises to the cell junction. The protein resides in the tight junction. Functionally, may act as a physical homophilic interaction molecule between intestinal epithelial cells (IECs) and intraepithelial lymphocytes (IELs) at the mucosal epithelium for providing immunological barrier as a first line of defense against mucosal infection. Plays a role in embryonic stem cells proliferation and differentiation. Up-regulates the expression of FABP5, MYC and cyclins A and E. The protein is Epithelial cell adhesion molecule (TACSTD1) of Sus scrofa (Pig).